The sequence spans 229 residues: NAD(P)H-hydrate epimerase (229 aa).

Residues 10–217 (AINVDQELFN…ALQRKYDLNL (208 aa)) enclose the YjeF N-terminal domain. (6S)-NADPHX is bound at residue 60–64 (NNGGD). K(+)-binding residues include asparagine 61 and aspartate 125. (6S)-NADPHX contacts are provided by residues 129 to 135 (GFSFKPP) and aspartate 158. Position 161 (serine 161) interacts with K(+).

Belongs to the NnrE/AIBP family. Requires K(+) as cofactor.

The catalysed reaction is (6R)-NADHX = (6S)-NADHX. It catalyses the reaction (6R)-NADPHX = (6S)-NADPHX. In terms of biological role, catalyzes the epimerization of the S- and R-forms of NAD(P)HX, a damaged form of NAD(P)H that is a result of enzymatic or heat-dependent hydration. This is a prerequisite for the S-specific NAD(P)H-hydrate dehydratase to allow the repair of both epimers of NAD(P)HX. The chain is NAD(P)H-hydrate epimerase from Drosophila ananassae (Fruit fly).